The sequence spans 1451 residues: DNA polymerase III PolC-type (1451 aa).

Residues 416-575 (FVIFDIETTG…YDTEALKKVF (160 aa)) enclose the Exonuclease domain.

It belongs to the DNA polymerase type-C family. PolC subfamily.

The protein localises to the cytoplasm. The enzyme catalyses DNA(n) + a 2'-deoxyribonucleoside 5'-triphosphate = DNA(n+1) + diphosphate. Required for replicative DNA synthesis. This DNA polymerase also exhibits 3' to 5' exonuclease activity. The polypeptide is DNA polymerase III PolC-type (Mycoplasma genitalium (strain ATCC 33530 / DSM 19775 / NCTC 10195 / G37) (Mycoplasmoides genitalium)).